The sequence spans 180 residues: Protein YOP1 (180 aa).

Ser-2 is subject to N-acetylserine. Positions 2 to 17 are interaction with YIP1; the sequence is SEYASSIHSQMKQFDT. Over 2–35 the chain is Cytoplasmic; that stretch reads SEYASSIHSQMKQFDTKYSGNRILQQLENKTNLP. The helical transmembrane segment at 36-55 threads the bilayer; the sequence is KSYLVAGLGFAYLLLIFINV. At 56–57 the chain is on the lumenal side; the sequence is GG. A helical transmembrane segment spans residues 58 to 78; that stretch reads VGEILSNFAGFVLPAYLSLVA. The Cytoplasmic portion of the chain corresponds to 79–88; sequence LKTPTSTDDT. A helical transmembrane segment spans residues 89–105; it reads QLLTYWIVFSFLSVIEF. Over 106–108 the chain is Lumenal; it reads WSK. A helical transmembrane segment spans residues 109 to 127; that stretch reads AILYLIPFYWFLKTVFLIY. The Cytoplasmic portion of the chain corresponds to 128–180; it reads IALPQTGGARMIYQKIVAPLTDRYILRDVSKTEKDEIRASVNEASKATGASVH.

Belongs to the DP1 family. Oligomer. Interacts with YIP1.

The protein resides in the endoplasmic reticulum membrane. The protein localises to the golgi apparatus membrane. Functionally, required to generate and maintain the structure of the tubular endoplasmic reticulum network and the vacuole. Induces high curvature in membranes and causes membrane tubule formation. Involved in membrane/vesicle trafficking. This Saccharomyces cerevisiae (strain ATCC 204508 / S288c) (Baker's yeast) protein is Protein YOP1 (YOP1).